The following is a 325-amino-acid chain: NAD kinase (325 aa).

Aspartate 91 (proton acceptor) is an active-site residue. NAD(+) contacts are provided by residues 91–92, histidine 96, 165–166, histidine 176, histidine 193, aspartate 195, and 206–211; these read DG, ND, and TAYALS.

It belongs to the NAD kinase family. A divalent metal cation is required as a cofactor.

Its subcellular location is the cytoplasm. It catalyses the reaction NAD(+) + ATP = ADP + NADP(+) + H(+). In terms of biological role, involved in the regulation of the intracellular balance of NAD and NADP, and is a key enzyme in the biosynthesis of NADP. Catalyzes specifically the phosphorylation on 2'-hydroxyl of the adenosine moiety of NAD to yield NADP. This Psychrobacter arcticus (strain DSM 17307 / VKM B-2377 / 273-4) protein is NAD kinase.